Here is a 503-residue protein sequence, read N- to C-terminus: L-amino-acid oxidase (503 aa).

A signal peptide spans Met-1–Cys-18. Residues Cys-28 and Cys-191 are joined by a disulfide bond. FAD contacts are provided by residues Met-61–Ser-62, Glu-81–Ala-82, Arg-89, and Gly-105–Arg-108. Arg-108 is a substrate binding site. Residue Asn-190 is glycosylated (N-linked (GlcNAc...) asparagine). His-241 lines the substrate pocket. Val-279 is an FAD binding site. A disulfide bridge links Cys-349 with Cys-430. Position 390 (Tyr-390) interacts with substrate. Residues Glu-475 and Gly-482 to Thr-487 each bind FAD. Gly-482–Trp-483 lines the substrate pocket.

The protein belongs to the flavin monoamine oxidase family. FIG1 subfamily. In terms of assembly, homodimer; non-covalently linked. The cofactor is FAD. N-glycosylated. The enzymatic activity is not affected by deglycosylation. In terms of tissue distribution, expressed by the venom gland.

It is found in the secreted. It carries out the reaction an L-alpha-amino acid + O2 + H2O = a 2-oxocarboxylate + H2O2 + NH4(+). The catalysed reaction is L-leucine + O2 + H2O = 4-methyl-2-oxopentanoate + H2O2 + NH4(+). It catalyses the reaction L-phenylalanine + O2 + H2O = 3-phenylpyruvate + H2O2 + NH4(+). The enzyme catalyses L-methionine + O2 + H2O = 4-methylsulfanyl-2-oxobutanoate + H2O2 + NH4(+). It carries out the reaction L-isoleucine + O2 + H2O = (S)-3-methyl-2-oxopentanoate + H2O2 + NH4(+). Catalyzes an oxidative deamination of predominantly hydrophobic and aromatic L-amino acids, thus producing hydrogen peroxide that may contribute to the diverse toxic effects of this enzyme. Is highly active on L-Met, L-Leu, L-Phe and L-Ile. Exhibits diverse biological activities, such as antibacterial on both Gram-positive and Gram-negative bacteria and antiparasitic activities, as well as induction of platelet aggregation. Effects of snake L-amino oxidases on platelets are controversial, since they either induce aggregation or inhibit agonist-induced aggregation. These different effects are probably due to different experimental conditions. This protein may also have activities in hemorrhage, hemolysis, edema, and apoptosis. This is L-amino-acid oxidase from Bothrops pauloensis (Neuwied's lancehead).